We begin with the raw amino-acid sequence, 81 residues long: RNA-binding protein KhpA (81 aa).

The 48-residue stretch at 34–81 (KIALRLSVHKSDTGKVIGKQGRTAKAIRTAVFAAGVQSSKKVQFEIFD) folds into the KH domain.

This sequence belongs to the KhpA RNA-binding protein family. In terms of assembly, forms a complex with KhpB.

It is found in the cytoplasm. A probable RNA chaperone. Forms a complex with KhpB which binds to cellular RNA and controls its expression. Plays a role in peptidoglycan (PG) homeostasis and cell length regulation. This is RNA-binding protein KhpA from Bacillus subtilis (strain 168).